The sequence spans 109 residues: Somatostatin-2 (109 aa).

A signal peptide spans 1 to 16 (MQFLASLVSFLLVVWS). The propeptide occupies 17-80 (VKATALPVED…EPLENKLEER (64 aa)). Residues Cys-98 and Cys-109 are joined by a disulfide bond.

This sequence belongs to the somatostatin family.

The protein localises to the secreted. Somatostatin inhibits the release of somatotropin. This chain is Somatostatin-2 (sst2), found in Protopterus annectens (African lungfish).